The primary structure comprises 204 residues: Protein GrpE (204 aa).

A disordered region spans residues 1-42; the sequence is MTDETAKNGPDAAADAQIEPQVQEETNSTAEDAGQDNNPTAA. Over residues 23–41 the composition is skewed to polar residues; sequence QEETNSTAEDAGQDNNPTA.

The protein belongs to the GrpE family. As to quaternary structure, homodimer.

It localises to the cytoplasm. Functionally, participates actively in the response to hyperosmotic and heat shock by preventing the aggregation of stress-denatured proteins, in association with DnaK and GrpE. It is the nucleotide exchange factor for DnaK and may function as a thermosensor. Unfolded proteins bind initially to DnaJ; upon interaction with the DnaJ-bound protein, DnaK hydrolyzes its bound ATP, resulting in the formation of a stable complex. GrpE releases ADP from DnaK; ATP binding to DnaK triggers the release of the substrate protein, thus completing the reaction cycle. Several rounds of ATP-dependent interactions between DnaJ, DnaK and GrpE are required for fully efficient folding. This is Protein GrpE from Allorhizobium ampelinum (strain ATCC BAA-846 / DSM 112012 / S4) (Agrobacterium vitis (strain S4)).